A 249-amino-acid chain; its full sequence is 2-dehydro-3-deoxy-L-rhamnonate dehydrogenase (NAD(+)) (249 aa).

The Proton acceptor role is filled by Tyr-156.

This sequence belongs to the short-chain dehydrogenases/reductases (SDR) family. In terms of assembly, homotetramer.

It catalyses the reaction 2-dehydro-3-deoxy-L-rhamnonate + NAD(+) = 2,4-didehydro-3-deoxy-L-rhamnonate + NADH + H(+). It functions in the pathway carbohydrate degradation; L-rhamnose degradation. Its function is as follows. Catalyzes the NAD(+)-dependent dehydrogenation of 2-dehydro-3-deoxy-L-rhamnonate to form 2,4-didehydro-3-deoxy-L-rhamnonate. Does not show any detectable activity in the presence of NADP(+). Catalyzes the fourth step in an alternative pathway for rhamnose utilization that does not involve phosphorylated intermediates. This chain is 2-dehydro-3-deoxy-L-rhamnonate dehydrogenase (NAD(+)), found in Sphingomonas sp. (strain SKA58).